The sequence spans 313 residues: 4-diphosphocytidyl-2-C-methyl-D-erythritol kinase (313 aa).

Residue K27 is part of the active site. Position 110–120 (110–120) interacts with ATP; it reads PIGGGVGGGSS. The active site involves D152.

This sequence belongs to the GHMP kinase family. IspE subfamily.

It carries out the reaction 4-CDP-2-C-methyl-D-erythritol + ATP = 4-CDP-2-C-methyl-D-erythritol 2-phosphate + ADP + H(+). It participates in isoprenoid biosynthesis; isopentenyl diphosphate biosynthesis via DXP pathway; isopentenyl diphosphate from 1-deoxy-D-xylulose 5-phosphate: step 3/6. Functionally, catalyzes the phosphorylation of the position 2 hydroxy group of 4-diphosphocytidyl-2C-methyl-D-erythritol. This is 4-diphosphocytidyl-2-C-methyl-D-erythritol kinase from Histophilus somni (strain 129Pt) (Haemophilus somnus).